Reading from the N-terminus, the 428-residue chain is Nucleotidyltransferase MB21D2 (428 aa).

Residues 366 to 389 (QRRGSTTSIPSPQSDGGDPNQPDD) are disordered. Positions 368–379 (RGSTTSIPSPQS) are enriched in polar residues. T372 is subject to Phosphothreonine. 3 positions are modified to phosphoserine: S373, S376, and S379.

This sequence belongs to the mab-21 family.

Its function is as follows. Probable nucleotidyltransferase that catalyzes the formation of cyclic dinucleotide second messenger in response to some unknown stimulus. The polypeptide is Nucleotidyltransferase MB21D2 (Mus musculus (Mouse)).